The chain runs to 204 residues: FMN-dependent NADH:quinone oxidoreductase (204 aa).

Residue Ser-9 coordinates FMN.

Belongs to the azoreductase type 1 family. As to quaternary structure, homodimer. FMN serves as cofactor.

It catalyses the reaction 2 a quinone + NADH + H(+) = 2 a 1,4-benzosemiquinone + NAD(+). The enzyme catalyses N,N-dimethyl-1,4-phenylenediamine + anthranilate + 2 NAD(+) = 2-(4-dimethylaminophenyl)diazenylbenzoate + 2 NADH + 2 H(+). Functionally, quinone reductase that provides resistance to thiol-specific stress caused by electrophilic quinones. Also exhibits azoreductase activity. Catalyzes the reductive cleavage of the azo bond in aromatic azo compounds to the corresponding amines. The sequence is that of FMN-dependent NADH:quinone oxidoreductase from Thiobacillus denitrificans (strain ATCC 25259 / T1).